The chain runs to 384 residues: S-adenosylmethionine synthase (384 aa).

His-15 lines the ATP pocket. Residue Asp-17 coordinates Mg(2+). Glu-43 serves as a coordination point for K(+). L-methionine is bound by residues Glu-56 and Gln-99. A flexible loop region spans residues 99 to 109 (QSPDINQGVDR). ATP is bound by residues 164 to 166 (DAK), 230 to 231 (RF), Asp-239, 245 to 246 (RK), Ala-262, and Lys-266. Asp-239 serves as a coordination point for L-methionine. Lys-270 contributes to the L-methionine binding site.

The protein belongs to the AdoMet synthase family. Homotetramer; dimer of dimers. Requires Mg(2+) as cofactor. K(+) is required as a cofactor.

The protein localises to the cytoplasm. It catalyses the reaction L-methionine + ATP + H2O = S-adenosyl-L-methionine + phosphate + diphosphate. Its pathway is amino-acid biosynthesis; S-adenosyl-L-methionine biosynthesis; S-adenosyl-L-methionine from L-methionine: step 1/1. In terms of biological role, catalyzes the formation of S-adenosylmethionine (AdoMet) from methionine and ATP. The overall synthetic reaction is composed of two sequential steps, AdoMet formation and the subsequent tripolyphosphate hydrolysis which occurs prior to release of AdoMet from the enzyme. This Yersinia enterocolitica serotype O:8 / biotype 1B (strain NCTC 13174 / 8081) protein is S-adenosylmethionine synthase.